We begin with the raw amino-acid sequence, 181 residues long: Oligoribonuclease (181 aa).

Positions 8–171 (LIWVDLEMTG…DDIRESIAEL (164 aa)) constitute an Exonuclease domain. The active site involves tyrosine 129.

Belongs to the oligoribonuclease family.

It is found in the cytoplasm. 3'-to-5' exoribonuclease specific for small oligoribonucleotides. This is Oligoribonuclease from Vibrio campbellii (strain ATCC BAA-1116).